A 213-amino-acid polypeptide reads, in one-letter code: Protein-L-isoaspartate O-methyltransferase (213 aa).

The active site involves Ser61.

It belongs to the methyltransferase superfamily. L-isoaspartyl/D-aspartyl protein methyltransferase family.

It localises to the cytoplasm. It catalyses the reaction [protein]-L-isoaspartate + S-adenosyl-L-methionine = [protein]-L-isoaspartate alpha-methyl ester + S-adenosyl-L-homocysteine. Catalyzes the methyl esterification of L-isoaspartyl residues in peptides and proteins that result from spontaneous decomposition of normal L-aspartyl and L-asparaginyl residues. It plays a role in the repair and/or degradation of damaged proteins. The protein is Protein-L-isoaspartate O-methyltransferase of Petrotoga mobilis (strain DSM 10674 / SJ95).